The chain runs to 468 residues: Cysteine--tRNA ligase (468 aa).

C36 provides a ligand contact to Zn(2+). The 'HIGH' region signature appears at 38 to 48 (PTVYNRSHIGN). Zn(2+)-binding residues include C216, H241, and E245. Positions 274–278 (KMSKS) match the 'KMSKS' region motif. K277 serves as a coordination point for ATP.

This sequence belongs to the class-I aminoacyl-tRNA synthetase family. Monomer. The cofactor is Zn(2+).

It localises to the cytoplasm. It carries out the reaction tRNA(Cys) + L-cysteine + ATP = L-cysteinyl-tRNA(Cys) + AMP + diphosphate. The sequence is that of Cysteine--tRNA ligase from Parvibaculum lavamentivorans (strain DS-1 / DSM 13023 / NCIMB 13966).